The following is a 143-amino-acid chain: Transcriptional regulator MraZ (143 aa).

SpoVT-AbrB domains are found at residues 5 to 47 and 76 to 119; these read THSP…TTRE and ANAE…DAGT.

It belongs to the MraZ family. As to quaternary structure, forms oligomers.

It localises to the cytoplasm. The protein localises to the nucleoid. This Clavibacter michiganensis subsp. michiganensis (strain NCPPB 382) protein is Transcriptional regulator MraZ.